Consider the following 79-residue polypeptide: UPF0180 protein BcerKBAB4_1316 (79 aa).

It belongs to the UPF0180 family.

This Bacillus mycoides (strain KBAB4) (Bacillus weihenstephanensis) protein is UPF0180 protein BcerKBAB4_1316.